We begin with the raw amino-acid sequence, 342 residues long: L-threonine 3-dehydrogenase (342 aa).

C38 contacts Zn(2+). Catalysis depends on charge relay system residues T40 and H43. Zn(2+) is bound by residues H63, E64, C93, C96, C99, and C107. NAD(+) contacts are provided by residues I175, D195, R200, 262–264 (LGI), and 286–287 (IY).

This sequence belongs to the zinc-containing alcohol dehydrogenase family. Homotetramer. The cofactor is Zn(2+).

It is found in the cytoplasm. It carries out the reaction L-threonine + NAD(+) = (2S)-2-amino-3-oxobutanoate + NADH + H(+). Its pathway is amino-acid degradation; L-threonine degradation via oxydo-reductase pathway; glycine from L-threonine: step 1/2. Its function is as follows. Catalyzes the NAD(+)-dependent oxidation of L-threonine to 2-amino-3-ketobutyrate. This Aeromonas salmonicida (strain A449) protein is L-threonine 3-dehydrogenase.